Reading from the N-terminus, the 670-residue chain is Neutral ceramidase (670 aa).

Positions Met1–Ala24 are cleaved as a signal peptide. His61 contacts Mg(2+). Substrate is bound by residues Asn84, Gln92, and Asp111. His121 serves as a coordination point for Zn(2+). Ser130 contributes to the substrate binding site. His228 contributes to the Zn(2+) binding site. The Nucleophile role is filled by Ser274. The cysteines at positions 346 and 394 are disulfide-linked. A Zn(2+)-binding site is contributed by Glu435. Tyr469 lines the substrate pocket. Position 472 (Tyr472) interacts with Zn(2+). 3 residues coordinate Mg(2+): Asp603, Asp605, and Thr608. The required for correct folding and localization stretch occupies residues Asn644–Pro670.

The protein belongs to the neutral ceramidase family. As to quaternary structure, homodimer. Requires Zn(2+) as cofactor. Mg(2+) is required as a cofactor.

The protein resides in the secreted. The catalysed reaction is an N-acylsphing-4-enine + H2O = sphing-4-enine + a fatty acid. With respect to regulation, inhibited by EDTA, EGTA and D/L-sphinganine D-erythro-sphingosine. L-erythro-sphingosine is a less powerful inhibitor. Stimulated by glycerophospholipids: cardiolipin is the most effective, followed by phosphatidic acid, phosphatidylethanolamine and phosphatidylglycerol, whereas phosphatidylcholine, lysophosphatidic acid and diacylglycerol are less effective. Its function is as follows. Catalyzes the cleavage of the N-acyl linkage of the ceramides (Cers) to yield sphingosine (Sph) and free fatty acid at an optimal pH of 8-9. Also catalyzes the synthesis of Cers from Sph and fatty acid. This chain is Neutral ceramidase, found in Pseudomonas aeruginosa (strain ATCC 15692 / DSM 22644 / CIP 104116 / JCM 14847 / LMG 12228 / 1C / PRS 101 / PAO1).